We begin with the raw amino-acid sequence, 98 residues long: Class II hydrophobin 2 (98 aa).

An N-terminal signal peptide occupies residues 1 to 21; sequence MFFSRISTIVSMTALFASALA. 4 disulfide bridges follow: Cys-34–Cys-80, Cys-41–Cys-71, Cys-42–Cys-54, and Cys-81–Cys-92.

The protein belongs to the cerato-ulmin hydrophobin family.

The protein resides in the secreted. It is found in the cell wall. Its function is as follows. Aerial growth, conidiation, and dispersal of filamentous fungi in the environment rely upon a capability of their secreting small amphipathic proteins called hydrophobins (HPBs) with low sequence identity. Class I can self-assemble into an outermost layer of rodlet bundles on aerial cell surfaces, conferring cellular hydrophobicity that supports fungal growth, development and dispersal; whereas Class II form highly ordered films at water-air interfaces through intermolecular interactions but contribute nothing to the rodlet structure. In Botryotinia fuckeliana, hydrophobins are not involved in conferring surface hydrophobicity to conidia and aerial hyphae and their function in sclerotia and fruiting bodies remains to be investigated. In Botryotinia fuckeliana (strain B05.10) (Noble rot fungus), this protein is Class II hydrophobin 2.